Reading from the N-terminus, the 203-residue chain is Orotate phosphoribosyltransferase (203 aa).

5-phospho-alpha-D-ribose 1-diphosphate contacts are provided by residues Arg-94, Lys-95, Lys-98, His-100, and 119–127; that span reads DDVATTGGS. Residues Thr-123 and Arg-151 each coordinate orotate.

Belongs to the purine/pyrimidine phosphoribosyltransferase family. PyrE subfamily. As to quaternary structure, homodimer. The cofactor is Mg(2+).

The catalysed reaction is orotidine 5'-phosphate + diphosphate = orotate + 5-phospho-alpha-D-ribose 1-diphosphate. It participates in pyrimidine metabolism; UMP biosynthesis via de novo pathway; UMP from orotate: step 1/2. Functionally, catalyzes the transfer of a ribosyl phosphate group from 5-phosphoribose 1-diphosphate to orotate, leading to the formation of orotidine monophosphate (OMP). This chain is Orotate phosphoribosyltransferase, found in Staphylothermus marinus (strain ATCC 43588 / DSM 3639 / JCM 9404 / F1).